The following is a 418-amino-acid chain: Dihydrofolate synthase/folylpolyglutamate synthase (418 aa).

53-56 (GKGT) serves as a coordination point for ATP. Serine 77 contributes to the Mg(2+) binding site. Position 116–119 (116–119 (TYFE)) interacts with 7,8-dihydropteroate. Glutamate 140 serves as a coordination point for Mg(2+). 147–149 (LDA) provides a ligand contact to 7,8-dihydropteroate. Histidine 167 serves as a coordination point for Mg(2+). ATP-binding residues include asparagine 252, arginine 284, and aspartate 297.

Belongs to the folylpolyglutamate synthase family. As to quaternary structure, monomer. The cofactor is Mg(2+).

It carries out the reaction 7,8-dihydropteroate + L-glutamate + ATP = 7,8-dihydrofolate + ADP + phosphate + H(+). The enzyme catalyses (6S)-5,6,7,8-tetrahydrofolyl-(gamma-L-Glu)(n) + L-glutamate + ATP = (6S)-5,6,7,8-tetrahydrofolyl-(gamma-L-Glu)(n+1) + ADP + phosphate + H(+). It catalyses the reaction 10-formyltetrahydrofolyl-(gamma-L-Glu)(n) + L-glutamate + ATP = 10-formyltetrahydrofolyl-(gamma-L-Glu)(n+1) + ADP + phosphate + H(+). The catalysed reaction is (6R)-5,10-methylenetetrahydrofolyl-(gamma-L-Glu)(n) + L-glutamate + ATP = (6R)-5,10-methylenetetrahydrofolyl-(gamma-L-Glu)(n+1) + ADP + phosphate + H(+). The protein operates within cofactor biosynthesis; tetrahydrofolate biosynthesis; 7,8-dihydrofolate from 2-amino-4-hydroxy-6-hydroxymethyl-7,8-dihydropteridine diphosphate and 4-aminobenzoate: step 2/2. It participates in cofactor biosynthesis; tetrahydrofolylpolyglutamate biosynthesis. In terms of biological role, functions in two distinct reactions of the de novo folate biosynthetic pathway. Catalyzes the addition of a glutamate residue to dihydropteroate (7,8-dihydropteroate or H2Pte) to form dihydrofolate (7,8-dihydrofolate monoglutamate or H2Pte-Glu). Also catalyzes successive additions of L-glutamate to tetrahydrofolate or 10-formyltetrahydrofolate or 5,10-methylenetetrahydrofolate, leading to folylpolyglutamate derivatives. The polypeptide is Dihydrofolate synthase/folylpolyglutamate synthase (folC) (Buchnera aphidicola subsp. Schizaphis graminum (strain Sg)).